The following is a 212-amino-acid chain: tRNA (guanine-N(7)-)-methyltransferase (212 aa).

Glutamate 44, aspartate 69, aspartate 96, and aspartate 118 together coordinate S-adenosyl-L-methionine. Residue aspartate 118 is part of the active site. Substrate is bound at residue lysine 122. The interaction with RNA stretch occupies residues 124–129 (RHEKRR). Substrate is bound by residues aspartate 154 and 191 to 194 (TEYE).

Belongs to the class I-like SAM-binding methyltransferase superfamily. TrmB family.

It carries out the reaction guanosine(46) in tRNA + S-adenosyl-L-methionine = N(7)-methylguanosine(46) in tRNA + S-adenosyl-L-homocysteine. It functions in the pathway tRNA modification; N(7)-methylguanine-tRNA biosynthesis. Catalyzes the formation of N(7)-methylguanine at position 46 (m7G46) in tRNA. This chain is tRNA (guanine-N(7)-)-methyltransferase, found in Streptococcus sanguinis (strain SK36).